The primary structure comprises 204 residues: Glycerol-3-phosphate acyltransferase (204 aa).

5 consecutive transmembrane segments (helical) span residues 8–28, 53–73, 81–101, 116–136, and 155–175; these read MLVF…CYIF, VPAI…VVLA, FITA…IFFG, FGFS…VAVI, and VIFT…IIIL.

Belongs to the PlsY family. As to quaternary structure, probably interacts with PlsX.

Its subcellular location is the cell inner membrane. The enzyme catalyses an acyl phosphate + sn-glycerol 3-phosphate = a 1-acyl-sn-glycero-3-phosphate + phosphate. The protein operates within lipid metabolism; phospholipid metabolism. Catalyzes the transfer of an acyl group from acyl-phosphate (acyl-PO(4)) to glycerol-3-phosphate (G3P) to form lysophosphatidic acid (LPA). This enzyme utilizes acyl-phosphate as fatty acyl donor, but not acyl-CoA or acyl-ACP. The protein is Glycerol-3-phosphate acyltransferase of Francisella philomiragia subsp. philomiragia (strain ATCC 25017 / CCUG 19701 / FSC 153 / O#319-036).